The chain runs to 724 residues: Methionine--tRNA ligase (724 aa).

The 'HIGH' region signature appears at 12–22; it reads PYVNNIPHLGN. Zn(2+) contacts are provided by Cys-143, Cys-146, Cys-155, and Cys-158. A 'KMSKS' region motif is present at residues 330–334; sequence KFSKS. Lys-333 is a binding site for ATP. The tRNA-binding domain maps to 560–665; it reads FREKVLLRVV…KNPIAGERII (106 aa).

This sequence belongs to the class-I aminoacyl-tRNA synthetase family. MetG type 1 subfamily. In terms of assembly, homodimer. Zn(2+) is required as a cofactor.

It is found in the cytoplasm. It catalyses the reaction tRNA(Met) + L-methionine + ATP = L-methionyl-tRNA(Met) + AMP + diphosphate. In terms of biological role, is required not only for elongation of protein synthesis but also for the initiation of all mRNA translation through initiator tRNA(fMet) aminoacylation. In Borreliella afzelii (strain PKo) (Borrelia afzelii), this protein is Methionine--tRNA ligase.